The sequence spans 359 residues: D-alanine--D-alanine ligase (359 aa).

One can recognise an ATP-grasp domain in the interval 141-346; the sequence is KRIFKEAGLP…YSTLLDELIN (206 aa). 172 to 227 is an ATP binding site; the sequence is IEHLGYPCFVKPANLGSSVGITKVHNEEELPGALKLAAKYDRKLLIERGIDAREIE. Residues Asp299, Glu313, and Asn315 each contribute to the Mg(2+) site.

Belongs to the D-alanine--D-alanine ligase family. Mg(2+) is required as a cofactor. Requires Mn(2+) as cofactor.

The protein localises to the cytoplasm. It catalyses the reaction 2 D-alanine + ATP = D-alanyl-D-alanine + ADP + phosphate + H(+). It participates in cell wall biogenesis; peptidoglycan biosynthesis. Cell wall formation. In Thermoanaerobacter pseudethanolicus (strain ATCC 33223 / 39E) (Clostridium thermohydrosulfuricum), this protein is D-alanine--D-alanine ligase.